Here is a 577-residue protein sequence, read N- to C-terminus: Aspartate--tRNA ligase (577 aa).

An L-aspartate-binding site is contributed by Glu-171. The segment at 195-198 (QLFK) is aspartate. Position 217 (Arg-217) interacts with L-aspartate. ATP contacts are provided by residues 217 to 219 (RDE) and Gln-226. His-437 contacts L-aspartate. ATP is bound at residue Glu-472. An L-aspartate-binding site is contributed by Arg-479. 524–527 (GFDR) lines the ATP pocket.

This sequence belongs to the class-II aminoacyl-tRNA synthetase family. Type 1 subfamily. As to quaternary structure, homodimer.

The protein resides in the cytoplasm. It catalyses the reaction tRNA(Asp) + L-aspartate + ATP = L-aspartyl-tRNA(Asp) + AMP + diphosphate. Its function is as follows. Catalyzes the attachment of L-aspartate to tRNA(Asp) in a two-step reaction: L-aspartate is first activated by ATP to form Asp-AMP and then transferred to the acceptor end of tRNA(Asp). This is Aspartate--tRNA ligase from Deinococcus deserti (strain DSM 17065 / CIP 109153 / LMG 22923 / VCD115).